A 2517-amino-acid chain; its full sequence is Non-reducing polyketide synthase pkbA (2517 aa).

Residues 59 to 250 are N-terminal acylcarrier protein transacylase domain (SAT); the sequence is LERVAGPAEK…KRFDLRGRFH (192 aa). Residues 380-775 enclose the Ketosynthase family 3 (KS3) domain; the sequence is SEPIAIIGMG…SANTVSSLKE (396 aa). Residues Cys547, His682, and His721 each act as for beta-ketoacyl synthase activity in the active site. The interval 849–1158 is malonyl-CoA:ACP transacylase (MAT) domain; sequence AFGGQVARSV…TGTAALADAT (310 aa). The For acyl/malonyl transferase activity role is filled by Ser935. Residues 1221–1353 form an N-terminal hotdog fold region; sequence EEFLTFVKYK…GTVVLRENDT (133 aa). A PKS/mFAS DH domain is found at 1221 to 1530; the sequence is EEFLTFVKYK…FTRVQISSLG (310 aa). Residues 1251–1525 form a product template (PT) domain region; it reads FVKGHAVLAE…ILGAHFTRVQ (275 aa). His1255 (proton acceptor; for dehydratase activity) is an active-site residue. The C-terminal hotdog fold stretch occupies residues 1379–1530; sequence DCHILQGPVV…FTRVQISSLG (152 aa). Asp1437 acts as the Proton donor; for dehydratase activity in catalysis. The 78-residue stretch at 1574-1651 folds into the Carrier 1 domain; it reads RPTLEISEKL…SISKCLASYL (78 aa). Ser1611 carries the post-translational modification O-(pantetheine 4'-phosphoryl)serine. The interval 1659–1684 is disordered; it reads QPEDLADADSVESDSDMPTGAVTSGI. Over residues 1662-1673 the composition is skewed to acidic residues; that stretch reads DLADADSVESDS. The Carrier 2 domain maps to 1685–1761; the sequence is TTPDDAVSRL…DLIALVPALN (77 aa). Ser1721 is subject to O-(pantetheine 4'-phosphoryl)serine. Positions 1976–2075 are methyltransferase (CMeT) domain; sequence LELGGGTGGT…IHRMLRPDGF (100 aa). Positions 2200-2514 are thioesterase (TE) domain; the sequence is LMIHGGGHIM…RGYDFLKEEV (315 aa).

Pantetheine 4'-phosphate is required as a cofactor.

The catalysed reaction is 3 malonyl-CoA + acetyl-CoA + S-adenosyl-L-methionine + H(+) = 3-methylorsellinate + S-adenosyl-L-homocysteine + 3 CO2 + 4 CoA. It functions in the pathway phytotoxin biosynthesis. Functionally, non-reducing polyketide synthase; part of the gene cluster that mediates the biosynthesis of cichorine, a phytotoxin active against knapweed, corn, and soybeans. The first step in the pathway is performed by the non-reducing polyketide synthase pkbA that condenses one acetyl-CoA starter unit with 3 malonyl-CoA units. PkbA also catalyzes one methylation step to produce 3-methylorsellinate. The nonribosomal peptide synthase-like protein cicB, the cytochrome P450 monooxygenase cicH and the O-methyltransferase cicE are involved in the conversion of 3-methylorsellinate into nidulol. CicB converts 3-methylorsellinate to a yet unidentified intermediate, cicH may play a ring-closing role for cichorine and cicE is plausibly responsible for the methylation of one of the phenol groups. The oxidoreductase cicC acts downstream with still unidentified enzymes to further convert nidulol into cichorin. This Emericella nidulans (strain FGSC A4 / ATCC 38163 / CBS 112.46 / NRRL 194 / M139) (Aspergillus nidulans) protein is Non-reducing polyketide synthase pkbA.